The sequence spans 273 residues: 5-deoxy-glucuronate isomerase (273 aa).

The protein belongs to the isomerase IolB family.

It carries out the reaction 5-deoxy-D-glucuronate = 5-dehydro-2-deoxy-D-gluconate. The protein operates within polyol metabolism; myo-inositol degradation into acetyl-CoA; acetyl-CoA from myo-inositol: step 4/7. In terms of biological role, involved in the isomerization of 5-deoxy-glucuronate (5DG) to 5-dehydro-2-deoxy-D-gluconate (DKG or 2-deoxy-5-keto-D-gluconate). The chain is 5-deoxy-glucuronate isomerase from Listeria monocytogenes serotype 4a (strain HCC23).